A 160-amino-acid chain; its full sequence is Protein TCP17 (160 aa).

The protein resides in the cytoplasm. The protein is Protein TCP17 of Trypanosoma cruzi.